The sequence spans 414 residues: Dihydroorotase (414 aa).

2 residues coordinate Zn(2+): His56 and His58. Substrate-binding positions include 58-60 and Asn90; that span reads HFR. 4 residues coordinate Zn(2+): Lys138, His171, His219, and Asp280. Lys138 is modified (N6-carboxylysine). Asp280 is a catalytic residue. Position 284 (His284) interacts with substrate.

Belongs to the metallo-dependent hydrolases superfamily. DHOase family. Class I DHOase subfamily. The cofactor is Zn(2+).

The enzyme catalyses (S)-dihydroorotate + H2O = N-carbamoyl-L-aspartate + H(+). Its pathway is pyrimidine metabolism; UMP biosynthesis via de novo pathway; (S)-dihydroorotate from bicarbonate: step 3/3. Catalyzes the reversible cyclization of carbamoyl aspartate to dihydroorotate. This chain is Dihydroorotase, found in Thermoplasma acidophilum (strain ATCC 25905 / DSM 1728 / JCM 9062 / NBRC 15155 / AMRC-C165).